The chain runs to 419 residues: S-adenosylmethionine synthase (419 aa).

H15 serves as a coordination point for ATP. Position 17 (D17) interacts with Mg(2+). E43 lines the K(+) pocket. Residues E56 and Q99 each contribute to the L-methionine site. The interval 99–109 (QSPEIAQGVSC) is flexible loop. ATP-binding positions include 173–175 (DGK), 253–254 (RF), D262, 268–269 (RK), A285, and K289. D262 provides a ligand contact to L-methionine. L-methionine is bound at residue K293.

It belongs to the AdoMet synthase family. In terms of assembly, homotetramer; dimer of dimers. It depends on Mg(2+) as a cofactor. K(+) is required as a cofactor.

It localises to the cytoplasm. The catalysed reaction is L-methionine + ATP + H2O = S-adenosyl-L-methionine + phosphate + diphosphate. Its pathway is amino-acid biosynthesis; S-adenosyl-L-methionine biosynthesis; S-adenosyl-L-methionine from L-methionine: step 1/1. Catalyzes the formation of S-adenosylmethionine (AdoMet) from methionine and ATP. The overall synthetic reaction is composed of two sequential steps, AdoMet formation and the subsequent tripolyphosphate hydrolysis which occurs prior to release of AdoMet from the enzyme. This Gloeobacter violaceus (strain ATCC 29082 / PCC 7421) protein is S-adenosylmethionine synthase.